A 161-amino-acid chain; its full sequence is UPF0262 protein Meso_0189 (161 aa).

The protein belongs to the UPF0262 family.

The chain is UPF0262 protein Meso_0189 from Chelativorans sp. (strain BNC1).